A 456-amino-acid polypeptide reads, in one-letter code: Probable glycine dehydrogenase (decarboxylating) subunit 1 (456 aa).

It belongs to the GcvP family. N-terminal subunit subfamily. The glycine cleavage system is composed of four proteins: P, T, L and H. In this organism, the P 'protein' is a heterodimer of two subunits.

The catalysed reaction is N(6)-[(R)-lipoyl]-L-lysyl-[glycine-cleavage complex H protein] + glycine + H(+) = N(6)-[(R)-S(8)-aminomethyldihydrolipoyl]-L-lysyl-[glycine-cleavage complex H protein] + CO2. The glycine cleavage system catalyzes the degradation of glycine. The P protein binds the alpha-amino group of glycine through its pyridoxal phosphate cofactor; CO(2) is released and the remaining methylamine moiety is then transferred to the lipoamide cofactor of the H protein. The chain is Probable glycine dehydrogenase (decarboxylating) subunit 1 from Rhizorhabdus wittichii (strain DSM 6014 / CCUG 31198 / JCM 15750 / NBRC 105917 / EY 4224 / RW1) (Sphingomonas wittichii).